The following is a 219-amino-acid chain: 7-carboxy-7-deazaguanine synthase (219 aa).

Substrate-binding positions include 22–24 (IQG) and arginine 37. Residues 28–219 (LVGLPSVFIR…PQVHKCFDLK (192 aa)) form the Radical SAM core domain. Residues cysteine 41, cysteine 45, and cysteine 48 each contribute to the [4Fe-4S] cluster site. Threonine 81 is a substrate binding site. Residues glycine 83 and 130–132 (SPK) contribute to the S-adenosyl-L-methionine site.

Belongs to the radical SAM superfamily. 7-carboxy-7-deazaguanine synthase family. In terms of assembly, homodimer. [4Fe-4S] cluster is required as a cofactor. Requires S-adenosyl-L-methionine as cofactor. The cofactor is Mg(2+).

The catalysed reaction is 6-carboxy-5,6,7,8-tetrahydropterin + H(+) = 7-carboxy-7-deazaguanine + NH4(+). Its pathway is purine metabolism; 7-cyano-7-deazaguanine biosynthesis. Its function is as follows. Catalyzes the complex heterocyclic radical-mediated conversion of 6-carboxy-5,6,7,8-tetrahydropterin (CPH4) to 7-carboxy-7-deazaguanine (CDG), a step common to the biosynthetic pathways of all 7-deazapurine-containing compounds. In Aquifex aeolicus (strain VF5), this protein is 7-carboxy-7-deazaguanine synthase.